The primary structure comprises 199 residues: MRLTVKQITWLKVCLHLAGFLPLLWLFWAINHGGLSADPVKDIQHFTGRTALKFLLATLLVSPLARYAKQPLLIRTRRLLGLWCFVWATLHLTSYALLELGIHNLALLGSELISRPYLTLGIISWLVLLALTLTSTQFAQRKLGKRWQTLHNVVYLVAILAPIHYLWSVKILSPQPVIYAALALALLALRYRKFRQWWR.

4 consecutive transmembrane segments (helical) span residues 10 to 30 (WLKVCLHLAGFLPLLWLFWAI), 82 to 102 (LWCFVWATLHLTSYALLELGI), 116 to 136 (PYLTLGIISWLVLLALTLTST), and 153 to 173 (VVYLVAILAPIHYLWSVKILS).

This sequence belongs to the MsrQ family. Heterodimer of a catalytic subunit (MsrP) and a heme-binding subunit (MsrQ). The cofactor is FMN. Requires heme b as cofactor.

It localises to the cell inner membrane. Its function is as follows. Part of the MsrPQ system that repairs oxidized periplasmic proteins containing methionine sulfoxide residues (Met-O), using respiratory chain electrons. Thus protects these proteins from oxidative-stress damage caused by reactive species of oxygen and chlorine generated by the host defense mechanisms. MsrPQ is essential for the maintenance of envelope integrity under bleach stress, rescuing a wide series of structurally unrelated periplasmic proteins from methionine oxidation, including the primary periplasmic chaperone SurA and the lipoprotein Pal. MsrQ provides electrons for reduction to the reductase catalytic subunit MsrP, using the quinone pool of the respiratory chain. This is Protein-methionine-sulfoxide reductase heme-binding subunit MsrQ from Salmonella newport (strain SL254).